Consider the following 444-residue polypeptide: Chromosomal replication initiator protein DnaA (444 aa).

Residues 1–66 form a domain I, interacts with DnaA modulators region; the sequence is MKSEIIESLK…SKTLRELFGK (66 aa). A domain II region spans residues 66 to 100; sequence KPMDFRIEHASAKTEEKLDSNEDEPLVKKRPLILT. The domain III, AAA+ region stretch occupies residues 101 to 317; it reads PLNPILTFEN…GALVKLIMYQ (217 aa). ATP is bound by residues Gly-144, Gly-146, Lys-147, and Thr-148. Residues 318 to 444 are domain IV, binds dsDNA; sequence QISGEKVDLQ…VTGQILDQSV (127 aa).

The protein belongs to the DnaA family. As to quaternary structure, oligomerizes as a right-handed, spiral filament on DNA at oriC.

Its subcellular location is the cytoplasm. Plays an essential role in the initiation and regulation of chromosomal replication. ATP-DnaA binds to the origin of replication (oriC) to initiate formation of the DNA replication initiation complex once per cell cycle. Binds the DnaA box (a 9 base pair repeat at the origin) and separates the double-stranded (ds)DNA. Forms a right-handed helical filament on oriC DNA; dsDNA binds to the exterior of the filament while single-stranded (ss)DNA is stabiized in the filament's interior. The ATP-DnaA-oriC complex binds and stabilizes one strand of the AT-rich DNA unwinding element (DUE), permitting loading of DNA polymerase. After initiation quickly degrades to an ADP-DnaA complex that is not apt for DNA replication. Binds acidic phospholipids. This is Chromosomal replication initiator protein DnaA from Pseudothermotoga lettingae (strain ATCC BAA-301 / DSM 14385 / NBRC 107922 / TMO) (Thermotoga lettingae).